The chain runs to 496 residues: Costunolide synthase (496 aa).

A helical; Signal-anchor for type II membrane protein membrane pass occupies residues 4–24 (FTIFSLVVASLVFFACWALVA). N-linked (GlcNAc...) asparagine glycosylation is found at N26, N168, N280, and N412. C434 provides a ligand contact to heme.

Belongs to the cytochrome P450 family. Requires heme as cofactor. As to expression, expressed in floral glandular trichomes.

It is found in the membrane. The catalysed reaction is germacra-1(10),4,11(13)-trien-12-oate + reduced [NADPH--hemoprotein reductase] + O2 = (+)-costunolide + oxidized [NADPH--hemoprotein reductase] + 2 H2O. The protein operates within secondary metabolite biosynthesis; terpenoid biosynthesis. In terms of biological role, involved in the biosynthesis of germacrene-derived sesquiterpene lactones. Component of the parthenolide biosynthetic pathway; parthenolide and conjugates are promising anti-cancer drugs highly active against colon cancer cells. Hydroxylates germacrene A acid to 6-alpha-hydroxy-germacrene A acid, a precursor of sesquiterpene lactones that spontaneously undergoes a lactonization which yields costunolide. This is Costunolide synthase from Tanacetum parthenium (Feverfew).